The sequence spans 431 residues: Nuclear receptor subfamily 1 group I member 2 (431 aa).

Positions 35 to 104 (LQICRVCGDK…RLRKCLESGM (70 aa)) form a DNA-binding region, nuclear receptor. 2 NR C4-type zinc fingers span residues 38-58 (CRVC…CEGC) and 74-99 (CPFR…LRKC). Positions 63 to 89 (RRAMKRNVRLRCPFRKGTCEITRKTRR) match the Bipartite nuclear localization signal motif. A hinge region spans residues 105-142 (KKEMIMSDAAVEQRRALIKRKKREKIEAPPPGGQGLTE). The NR LBD domain occupies 143–430 (EQQALIQELM…LMQELFSSTD (288 aa)). Residues Ser-244 and 282 to 285 (ILRF) contribute to the hyperforin site.

The protein belongs to the nuclear hormone receptor family. NR1 subfamily. As to quaternary structure, heterodimer with RXRA. Interacts with NCOA1. Interacts (via domain NR LBD) with CRY1 and CRY2 in a ligand-dependent manner.

Its subcellular location is the nucleus. Functionally, nuclear receptor that binds and is activated by a variety of endogenous and xenobiotic compounds. Transcription factor that activates the transcription of multiple genes involved in the metabolism and secretion of potentially harmful xenobiotics, endogenous compounds and drugs. Response to specific ligands is species-specific, due to differences in the ligand-binding domain. Binds to a response element in the promoters of the CYP3A4 and ABCB1/MDR1 genes. Activated by naturally occurring steroids such as pregnenolone and progesterone, the cholesterol metabolite 5-beta-cholestane-3-alpha,7-alpha,12-alpha-triol, synthetic glucocorticoids and antiglucocorticoids and 16-alpha-carbonitrile (PCN). This is Nuclear receptor subfamily 1 group I member 2 (Nr1i2) from Mus musculus (Mouse).